The following is a 182-amino-acid chain: Transmembrane protein 11 homolog, mitochondrial (182 aa).

The residue at position 25 (S25) is a Phosphoserine. A run of 2 helical transmembrane segments spans residues 70–89 (TAVA…RDRP) and 91–108 (IAAP…LYTV).

Belongs to the TMEM11 family.

It localises to the mitochondrion inner membrane. Its function is as follows. Plays a role in mitochondrial morphogenesis. The chain is Transmembrane protein 11 homolog, mitochondrial (Pmi) from Drosophila melanogaster (Fruit fly).